A 159-amino-acid chain; its full sequence is MQKRAIYPGTFDPITNGHLDIVTRATQMFDHVILAIAASPGKKPMFTLDERVALAQKATAHLGNVEVVGFSDLMANFARDRQANILIRGLRAVADFEYEMQLAHMNRHLMPQLESVFLMPSKEWSFISSSLVKEVARHQGDVTHFLPDNVHQALMDKLK.

Thr10 is a substrate binding site. ATP-binding positions include 10–11 (TF) and His18. Substrate contacts are provided by Lys42, Met74, and Arg88. Residues 89 to 91 (GLR), Glu99, and 124 to 130 (WSFISSS) each bind ATP.

Belongs to the bacterial CoaD family. Homohexamer. Mg(2+) serves as cofactor.

It is found in the cytoplasm. It carries out the reaction (R)-4'-phosphopantetheine + ATP + H(+) = 3'-dephospho-CoA + diphosphate. Its pathway is cofactor biosynthesis; coenzyme A biosynthesis; CoA from (R)-pantothenate: step 4/5. In terms of biological role, reversibly transfers an adenylyl group from ATP to 4'-phosphopantetheine, yielding dephospho-CoA (dPCoA) and pyrophosphate. In Salmonella dublin (strain CT_02021853), this protein is Phosphopantetheine adenylyltransferase.